We begin with the raw amino-acid sequence, 178 residues long: uncharacterized protein (178 aa).

The signal sequence occupies residues 1–23 (MTMFKKISVLFFTLILAGCSSWS).

This is an uncharacterized protein from Haemophilus influenzae (strain ATCC 51907 / DSM 11121 / KW20 / Rd).